A 185-amino-acid polypeptide reads, in one-letter code: Large ribosomal subunit protein uL5 (185 aa).

This sequence belongs to the universal ribosomal protein uL5 family. In terms of assembly, part of the 50S ribosomal subunit; part of the 5S rRNA/L5/L18/L25 subcomplex. Contacts the 5S rRNA and the P site tRNA. Forms a bridge to the 30S subunit in the 70S ribosome.

This is one of the proteins that bind and probably mediate the attachment of the 5S RNA into the large ribosomal subunit, where it forms part of the central protuberance. In the 70S ribosome it contacts protein S13 of the 30S subunit (bridge B1b), connecting the 2 subunits; this bridge is implicated in subunit movement. Contacts the P site tRNA; the 5S rRNA and some of its associated proteins might help stabilize positioning of ribosome-bound tRNAs. The chain is Large ribosomal subunit protein uL5 from Nitrobacter winogradskyi (strain ATCC 25391 / DSM 10237 / CIP 104748 / NCIMB 11846 / Nb-255).